A 21-amino-acid chain; its full sequence is Peptide PGLa-R3 (21 aa).

Leucine amide is present on Leu-21.

In terms of tissue distribution, expressed by the skin glands.

It is found in the secreted. Antimicrobial peptide. This chain is Peptide PGLa-R3, found in Xenopus ruwenzoriensis (Uganda clawed frog).